The sequence spans 288 residues: Bifunctional protein FolD (288 aa).

NADP(+) is bound by residues 166–168 and isoleucine 232; that span reads GAS.

The protein belongs to the tetrahydrofolate dehydrogenase/cyclohydrolase family. In terms of assembly, homodimer.

The catalysed reaction is (6R)-5,10-methylene-5,6,7,8-tetrahydrofolate + NADP(+) = (6R)-5,10-methenyltetrahydrofolate + NADPH. It catalyses the reaction (6R)-5,10-methenyltetrahydrofolate + H2O = (6R)-10-formyltetrahydrofolate + H(+). It functions in the pathway one-carbon metabolism; tetrahydrofolate interconversion. Its function is as follows. Catalyzes the oxidation of 5,10-methylenetetrahydrofolate to 5,10-methenyltetrahydrofolate and then the hydrolysis of 5,10-methenyltetrahydrofolate to 10-formyltetrahydrofolate. The chain is Bifunctional protein FolD from Escherichia coli (strain UTI89 / UPEC).